A 215-amino-acid chain; its full sequence is Cytochrome c biogenesis ATP-binding export protein CcmA (215 aa).

One can recognise an ABC transporter domain in the interval 12 to 215; the sequence is LAAHALTYSR…TRLLHLQKAP (204 aa). 44–51 serves as a coordination point for ATP; it reads GPNGIGKT.

Belongs to the ABC transporter superfamily. CcmA exporter (TC 3.A.1.107) family. The complex is composed of two ATP-binding proteins (CcmA) and two transmembrane proteins (CcmB).

The protein localises to the cell inner membrane. The enzyme catalyses heme b(in) + ATP + H2O = heme b(out) + ADP + phosphate + H(+). Part of the ABC transporter complex CcmAB involved in the biogenesis of c-type cytochromes; once thought to export heme, this seems not to be the case, but its exact role is uncertain. Responsible for energy coupling to the transport system. The protein is Cytochrome c biogenesis ATP-binding export protein CcmA of Xylella fastidiosa (strain Temecula1 / ATCC 700964).